Reading from the N-terminus, the 73-residue chain is MNLDQPSTENMKYILDTLAEELQIVNRSIMEVEDYNLDKYEDLKMMYEMVKTKGQLSALEKQAFIQELSSIRK.

This sequence belongs to the UPF0435 family.

In Oceanobacillus iheyensis (strain DSM 14371 / CIP 107618 / JCM 11309 / KCTC 3954 / HTE831), this protein is UPF0435 protein OB1527.